Reading from the N-terminus, the 3661-residue chain is Serine/threonine-protein kinase SMG1 (3661 aa).

Residues 1 to 11 (MSRRAPGSRLS) show a composition bias toward low complexity. Disordered regions lie at residues 1 to 101 (MSRR…TYGR) and 116 to 144 (PEFT…MSYS). The interaction with SMG8 and SMG9 stretch occupies residues 1–1977 (MSRRAPGSRL…GVLLQQHMYV (1977 aa)). The span at 26 to 35 (NDWQPRTDSA) shows a compositional bias: polar residues. 2 stretches are compositionally biased toward basic and acidic residues: residues 69-86 (QRHD…DEKG) and 129-138 (ATKDMRKSQE). Lys-173 carries the N6-acetyllysine modification. Residues 1154–1165 (RNSASPKHSLNG) are compositionally biased toward polar residues. A disordered region spans residues 1154–1175 (RNSASPKHSLNGESRKTVLSKP). Residues 1283–1866 (RELQKSIEVQ…LYPAIVGTIS (584 aa)) enclose the FAT domain. The HEAT repeat unit spans residues 1817 to 1852 (APWRGIIPQLFSRLNHPEVYVRQSICNLLCRVAQDS). Positions 1898–1919 (ECEGGSPPASQDSNKDEPKSGL) are disordered. The region spanning 2124 to 2463 (VGGTITILPT…MEREITRSLF (340 aa)) is the PI3K/PI4K catalytic domain. The interval 2130-2136 (ILPTKTK) is G-loop. The segment at 2332–2340 (GLGDRHLDN) is catalytic loop. Residues 2352–2376 (HIDYNVCFEKGKSLRVPEKVPFRMT) form an activation loop region. Thr-3550 carries the phosphothreonine modification. A phosphoserine mark is found at Ser-3556 and Ser-3570. Over residues 3568-3579 (ATSADTPPSTVP) the composition is skewed to polar residues. The disordered stretch occupies residues 3568 to 3591 (ATSADTPPSTVPGTGKSVACSPKK). Residues Thr-3573 and Thr-3577 each carry the phosphothreonine modification. The region spanning 3629–3661 (RRMSVAEQVDYVIKEATNLDNLAQLYEGWTAWV) is the FATC domain.

The protein belongs to the PI3/PI4-kinase family. In terms of assembly, component of the SMG1C complex composed of SMG1, SMG8 and SMG9; the recruitment of SMG8 to SMG1 N-terminus induces a large conformational change in the SMG1 C-terminal head domain containing the catalytic domain. Component of the transient SURF (SMG1-UPF1-eRF1-eRF3) complex. Part of a complex composed of SMG1, DHX34 and UPF1; within the complex DHX34 acts as a scaffolding protein to facilitate SMG1 phosphorylation of UPF1. Interacts with PRKCI. Interacts with TELO2 and TTI1. Interacts with RUVBL1 and RUVBL2. Interacts with UPF2. Interacts with DHX34 (via C-terminus); the interaction is RNA-independent. It depends on Mn(2+) as a cofactor. In terms of processing, autophosphorylated. In terms of tissue distribution, widely expressed, with highest level in heart and skeletal muscle. Expressed in placenta, brain, lung and spleen, but not in liver.

The protein localises to the nucleus. It is found in the cytoplasm. The catalysed reaction is L-seryl-[protein] + ATP = O-phospho-L-seryl-[protein] + ADP + H(+). The enzyme catalyses L-threonyl-[protein] + ATP = O-phospho-L-threonyl-[protein] + ADP + H(+). Inhibited by caffeine, LY294002 and wortmannin. Its function is as follows. Serine/threonine protein kinase involved in both mRNA surveillance and genotoxic stress response pathways. Recognizes the substrate consensus sequence [ST]-Q. Plays a central role in nonsense-mediated decay (NMD) of mRNAs containing premature stop codons by phosphorylating UPF1/RENT1. Recruited by release factors to stalled ribosomes together with SMG8 and SMG9 (forming the SMG1C protein kinase complex), and UPF1 to form the transient SURF (SMG1-UPF1-eRF1-eRF3) complex. In EJC-dependent NMD, the SURF complex associates with the exon junction complex (EJC) through UPF2 and allows the formation of an UPF1-UPF2-UPF3 surveillance complex which is believed to activate NMD. Also acts as a genotoxic stress-activated protein kinase that displays some functional overlap with ATM. Can phosphorylate p53/TP53 and is required for optimal p53/TP53 activation after cellular exposure to genotoxic stress. Its depletion leads to spontaneous DNA damage and increased sensitivity to ionizing radiation (IR). May activate PRKCI but not PRKCZ. This is Serine/threonine-protein kinase SMG1 from Homo sapiens (Human).